The sequence spans 130 residues: Small ribosomal subunit protein uS8 (130 aa).

Belongs to the universal ribosomal protein uS8 family. Part of the 30S ribosomal subunit. Contacts proteins S5 and S12.

One of the primary rRNA binding proteins, it binds directly to 16S rRNA central domain where it helps coordinate assembly of the platform of the 30S subunit. The chain is Small ribosomal subunit protein uS8 from Actinobacillus succinogenes (strain ATCC 55618 / DSM 22257 / CCUG 43843 / 130Z).